Consider the following 108-residue polypeptide: UPF0060 membrane protein YnfA (108 aa).

Topologically, residues 1-5 are periplasmic; sequence MIKTT. Residues 6 to 26 traverse the membrane as a helical segment; sequence LLFFATALCEIIGCFLPWLWL. Residues 27–30 are Cytoplasmic-facing; that stretch reads KRNA. Residues 31–51 traverse the membrane as a helical segment; it reads SIWLLLPAGISLALFVWLLTL. Residues 52–60 lie on the Periplasmic side of the membrane; the sequence is HPAASGRVY. A helical membrane pass occupies residues 61-81; it reads AAYGGVYVCTALIWLRVVDGV. Topologically, residues 82-84 are cytoplasmic; sequence KLT. Residues 85–105 traverse the membrane as a helical segment; it reads LYDWTGALIALCGMLIIVAGW. The Periplasmic segment spans residues 106-108; sequence GRT.

The protein belongs to the UPF0060 family.

The protein resides in the cell inner membrane. This Escherichia coli O127:H6 (strain E2348/69 / EPEC) protein is UPF0060 membrane protein YnfA.